Consider the following 78-residue polypeptide: Large ribosomal subunit protein bL28 (78 aa).

Residues M1–H20 form a disordered region.

This sequence belongs to the bacterial ribosomal protein bL28 family.

This Vibrio parahaemolyticus serotype O3:K6 (strain RIMD 2210633) protein is Large ribosomal subunit protein bL28.